The primary structure comprises 3165 residues: Protein eyes shut homolog (3165 aa).

Residues 1 to 21 (MTDKSIIILSLMVFHSSFING) form the signal peptide. 4 N-linked (GlcNAc...) asparagine glycosylation sites follow: Asn-42, Asn-105, Asn-117, and Asn-166. 3 EGF-like domains span residues 170-212 (KQQF…KYCQ), 213-254 (ELDA…KNCS), and 256-292 (IIVQCQPHVCFHGNCSNITSNSFICECDEQFSGPFCE). 9 cysteine pairs are disulfide-bonded: Cys-174-Cys-189, Cys-183-Cys-200, Cys-202-Cys-211, Cys-217-Cys-228, Cys-222-Cys-242, Cys-244-Cys-253, Cys-260-Cys-270, Cys-265-Cys-280, and Cys-282-Cys-291. Residues Asn-252, Asn-269, and Asn-272 are each glycosylated (N-linked (GlcNAc...) asparagine). N-linked (GlcNAc...) asparagine glycosylation is found at Asn-311 and Asn-343. 2 EGF-like domains span residues 332-368 (DVSECSLILCENGTDGIKISNDVMCICSPIFTDLLCK) and 370-406 (FQTSCESFPLKNNATFKKCEKDYHCSCMSGFTGKNCE). 2 disulfide bridges follow: Cys-341-Cys-356 and Cys-358-Cys-367. Asn-382 is a glycosylation site (N-linked (GlcNAc...) asparagine). A disulfide bridge links Cys-396 with Cys-405. Residues Asn-506, Asn-520, Asn-521, Asn-566, and Asn-573 are each glycosylated (N-linked (GlcNAc...) asparagine). EGF-like domains follow at residues 566–602 (NITDDQENKSQHEAICEDEINRPRCSCSLSYIGRLCV), 604–641 (NVDYCLGNQSISVHGLCLALSHNCNCSDLQKYEGNICE), and 643–679 (DIEDCKSVSCKNGTTSIHLRGYFFYKCVPGFKGTRCE). Intrachain disulfides connect Cys-592/Cys-601 and Cys-608/Cys-620. N-linked (GlcNAc...) asparagine glycosylation is found at Asn-611 and Asn-628. Cys-629 and Cys-640 are joined by a disulfide. Asn-654 carries N-linked (GlcNAc...) asparagine glycosylation. 4 cysteine pairs are disulfide-bonded: Cys-669–Cys-678, Cys-685–Cys-696, Cys-690–Cys-705, and Cys-707–Cys-719. Positions 681–720 (DLDECALHPCKSGATCIDQPGNYFCQCGPPFKVVDGFSCL) constitute an EGF-like 9; calcium-binding domain. Positions 733-769 (NIDNCILNAFEHNSTYKDLHLSYQCVCLSGWEGNFCE) constitute an EGF-like 10 domain. The N-linked (GlcNAc...) asparagine glycan is linked to Asn-745. 34 cysteine pairs are disulfide-bonded: Cys-759–Cys-768, Cys-775–Cys-786, Cys-780–Cys-795, Cys-797–Cys-806, Cys-813–Cys-824, Cys-818–Cys-835, Cys-837–Cys-846, Cys-853–Cys-866, Cys-860–Cys-876, Cys-878–Cys-887, Cys-894–Cys-905, Cys-899–Cys-914, Cys-916–Cys-925, Cys-932–Cys-943, Cys-937–Cys-952, Cys-954–Cys-963, Cys-970–Cys-981, Cys-975–Cys-990, Cys-992–Cys-1001, Cys-1008–Cys-1019, Cys-1013–Cys-1028, Cys-1030–Cys-1039, Cys-1046–Cys-1056, Cys-1051–Cys-1065, Cys-1067–Cys-1076, Cys-1083–Cys-1094, Cys-1088–Cys-1103, Cys-1105–Cys-1114, Cys-1121–Cys-1137, Cys-1131–Cys-1147, Cys-1149–Cys-1158, Cys-1165–Cys-1176, Cys-1170–Cys-1185, and Cys-1187–Cys-1196. Residues 771-807 (ESNECKMNPCKNNSTCTDLYKSYRCECTSGWTGQNCS) enclose the EGF-like 11; calcium-binding domain. N-linked (GlcNAc...) asparagine glycosylation is found at Asn-782, Asn-783, and Asn-805. EGF-like domains follow at residues 809-847 (EINECDSDPCMNGGLCHESTIPGQFVCLCPPLYTGQFCH), 849-888 (RYNPCDLLNNPCRNNSTCLALVDGNQHCICREEFEGKHCE), and 890-926 (DVKECLFLSCQDYGDCEDMVNNFRCICRPGFSGSLCE). N-linked (GlcNAc...) asparagine glycosylation is found at Asn-862 and Asn-863. The EGF-like 15; calcium-binding domain maps to 928 to 964 (EINECSSEPCKNNGTCVDLTNRFFCNCEPGYHGPFCE). N-linked (GlcNAc...) asparagine glycosylation occurs at Asn-940. Positions 966–1002 (EVNKCKISPCLDEENCVYRTDRYNCLCAPGYTGINCE) constitute an EGF-like 16 domain. The region spanning 1004–1040 (NLDECLSEPCLHDGVCIDGINHYTCDCKSGFFGTHCE) is the EGF-like 17; calcium-binding domain. EGF-like domains lie at 1042 to 1077 (NANDCLSNPCLHGRCTEPINEYPCSCDADGTSIQCK), 1079 to 1115 (KINDCTSMPCMNEGFCQKSAHGFTCICPRGYTGAYCE), and 1117 to 1159 (SIDN…QFCE). In terms of domain architecture, EGF-like 21; calcium-binding spans 1161-1197 (NINECSSSPCLHGANCEDHINGYVCKCQPGWSGHHCE). N-linked (GlcNAc...) asparagine glycosylation is found at Asn-1509, Asn-1906, Asn-1941, and Asn-2033. A Laminin G-like 1 domain is found at 1883 to 2063 (FSCVCYYGDS…AVRNYHINNC (181 aa)). Intrachain disulfides connect Cys-2037–Cys-2063, Cys-2103–Cys-2114, Cys-2108–Cys-2128, and Cys-2130–Cys-2139. Residues 2099-2140 (APSVCQEDVCHNGGTCRPIFLSSGIVSFQCDCPLHFTGRFCE) form the EGF-like 22 domain. One can recognise a Laminin G-like 2 domain in the interval 2145–2339 (LFFPSFSGNS…NIENCHVPWC (195 aa)). Asn-2170, Asn-2185, and Asn-2228 each carry an N-linked (GlcNAc...) asparagine glycan. 6 cysteine pairs are disulfide-bonded: Cys-2308–Cys-2339, Cys-2339–Cys-2350, Cys-2344–Cys-2359, Cys-2375–Cys-2386, Cys-2380–Cys-2396, and Cys-2398–Cys-2407. EGF-like domains lie at 2335-2368 (HVPWCAHHLCRNNGTCLSDSENLFCECPRLYSGK) and 2371-2408 (QFASCENNPCGNGATCVPKSGTDIICLCPYGRSGPLCT). The N-linked (GlcNAc...) asparagine glycan is linked to Asn-2347. Residues Asn-2412, Asn-2453, Asn-2484, Asn-2506, and Asn-2532 are each glycosylated (N-linked (GlcNAc...) asparagine). Residues 2419–2609 (SGTDAFGYTS…PNAGRSVGQC (191 aa)) enclose the Laminin G-like 3 domain. Disulfide bonds link Cys-2576–Cys-2609, Cys-2614–Cys-2625, and Cys-2619–Cys-2634. 2 EGF-like domains span residues 2610–2646 (HASPCSLMKCGNGGTCIESGTSVYCNCTTRWKGAFCT) and 2648–2689 (TVSI…IYCE). Asn-2635 is a glycosylation site (N-linked (GlcNAc...) asparagine). 4 disulfide bridges follow: Cys-2636–Cys-2645, Cys-2652–Cys-2668, Cys-2662–Cys-2677, and Cys-2679–Cys-2688. The Laminin G-like 4 domain occupies 2717–2895 (DPSFRSSELS…AKGGSNVGDC (179 aa)). N-linked (GlcNAc...) asparagine glycans are attached at residues Asn-2775, Asn-2800, and Asn-2824. Intrachain disulfides connect Cys-2868/Cys-2895, Cys-2900/Cys-2911, Cys-2905/Cys-2920, and Cys-2922/Cys-2931. 2 consecutive EGF-like domains span residues 2896 to 2932 (DGTACGYNTCRNGGECRVNGTTFSCRCLPDWAGNICN) and 2933 to 2970 (QSAYCLNNLCLHQSLCIPDQSFSYSCLCTLGWVGRYCE). Asn-2914 carries N-linked (GlcNAc...) asparagine glycosylation. N-linked (GlcNAc...) asparagine glycosylation is present at Asn-2932. Intrachain disulfides connect Cys-2937–Cys-2948, Cys-2942–Cys-2958, and Cys-2960–Cys-2969. Residues Asn-2971, Asn-3006, Asn-3036, Asn-3057, Asn-3073, and Asn-3082 are each glycosylated (N-linked (GlcNAc...) asparagine). A Laminin G-like 5 domain is found at 2975–3165 (FTTAKFMGNS…YDGDEQNEVT (191 aa)).

It belongs to the EYS family. As to expression, expressed in retina (at protein level).

The protein localises to the cell projection. It is found in the cilium. Its subcellular location is the photoreceptor outer segment. The protein resides in the cytoplasm. It localises to the cytoskeleton. The protein localises to the cilium axoneme. It is found in the microtubule organizing center. Its subcellular location is the centrosome. The protein resides in the secreted. It localises to the extracellular space. The protein localises to the extracellular matrix. It is found in the interphotoreceptor matrix. Its function is as follows. Required to maintain the integrity of photoreceptor cells. Specifically required for normal morphology of the photoreceptor ciliary pocket, and might thus facilitate protein trafficking between the photoreceptor inner and outer segments via the transition zone. The polypeptide is Protein eyes shut homolog (Macaca fascicularis (Crab-eating macaque)).